A 282-amino-acid chain; its full sequence is B3 domain-containing protein At5g25475 (282 aa).

The TF-B3 DNA-binding region spans 20–114 (WKSLSPGQTW…NLEVQIFKNN (95 aa)). A disordered region spans residues 127–178 (PETEPFHPTPKKPHKETTPASSFASGSGCSANGGTNGRGKQRSSDVKNPERY). Residues 144–159 (TPASSFASGSGCSANG) show a composition bias toward low complexity.

It is found in the nucleus. In Arabidopsis thaliana (Mouse-ear cress), this protein is B3 domain-containing protein At5g25475.